Consider the following 176-residue polypeptide: Ribosome maturation factor RimM (176 aa).

The 80-residue stretch at 97–176 folds into the PRC barrel domain; that stretch reads DNDFYHRDLI…QIVVDWDPDF (80 aa).

The protein belongs to the RimM family. As to quaternary structure, binds ribosomal protein uS19.

Its subcellular location is the cytoplasm. Its function is as follows. An accessory protein needed during the final step in the assembly of 30S ribosomal subunit, possibly for assembly of the head region. Essential for efficient processing of 16S rRNA. May be needed both before and after RbfA during the maturation of 16S rRNA. It has affinity for free ribosomal 30S subunits but not for 70S ribosomes. The polypeptide is Ribosome maturation factor RimM (Shewanella denitrificans (strain OS217 / ATCC BAA-1090 / DSM 15013)).